A 185-amino-acid polypeptide reads, in one-letter code: Phospholipase A2 inhibitor 25 kDa subunit (185 aa).

Intrachain disulfides connect C3–C27, C6–C13, C20–C48, C54–C75, C76–C81, C101–C126, C119–C146, and C152–C172.

The protein belongs to the CNF-like-inhibitor family. As to quaternary structure, heterodimer with phospholipase A2 inhibitor 31 kDa. As to expression, expressed by the liver.

It is found in the secreted. In terms of biological role, inhibits the enzymatic activity of phospholipase A2. The protein is Phospholipase A2 inhibitor 25 kDa subunit of Naja kaouthia (Monocled cobra).